A 94-amino-acid polypeptide reads, in one-letter code: Small ribosomal subunit protein bS6 (94 aa).

This sequence belongs to the bacterial ribosomal protein bS6 family.

Binds together with bS18 to 16S ribosomal RNA. This Phytoplasma mali (strain AT) protein is Small ribosomal subunit protein bS6.